The primary structure comprises 542 residues: Chaperonin GroEL (542 aa).

ATP contacts are provided by residues 29–32 (TMGP), K50, 86–90 (DGTTT), G414, 477–479 (NAA), and D493.

Belongs to the chaperonin (HSP60) family. Forms a cylinder of 14 subunits composed of two heptameric rings stacked back-to-back. Interacts with the co-chaperonin GroES.

The protein resides in the cytoplasm. The catalysed reaction is ATP + H2O + a folded polypeptide = ADP + phosphate + an unfolded polypeptide.. Together with its co-chaperonin GroES, plays an essential role in assisting protein folding. The GroEL-GroES system forms a nano-cage that allows encapsulation of the non-native substrate proteins and provides a physical environment optimized to promote and accelerate protein folding. This chain is Chaperonin GroEL, found in Sulfurimonas denitrificans (strain ATCC 33889 / DSM 1251) (Thiomicrospira denitrificans (strain ATCC 33889 / DSM 1251)).